We begin with the raw amino-acid sequence, 406 residues long: RING finger protein PSH1 (406 aa).

The RING-type zinc-finger motif lies at 30-72; that stretch reads CSICHDYMFVPMMTPCGHNYCYGCLNTWFASNTQKELACPQCR. 2 positions are modified to phosphoserine: Ser-143 and Ser-191. Residues 209-406 form a disordered region; it reads RFASTNPFAN…RVVLGDSDDE (198 aa). Acidic residues-rich tracts occupy residues 223-232, 256-274, and 281-291; these read SSEDDDSSEE, AVDD…EEMD, and IEDDEDDEDED. Thr-310 carries the phosphothreonine modification. Residue Ser-403 is modified to Phosphoserine.

In terms of assembly, interacts with POB3 and SPT16.

It is found in the nucleus. The polypeptide is RING finger protein PSH1 (PSH1) (Saccharomyces cerevisiae (strain ATCC 204508 / S288c) (Baker's yeast)).